A 155-amino-acid chain; its full sequence is Cyanate hydratase (155 aa).

Catalysis depends on residues Arg-101, Glu-104, and Ser-127.

This sequence belongs to the cyanase family.

It catalyses the reaction cyanate + hydrogencarbonate + 3 H(+) = NH4(+) + 2 CO2. Functionally, catalyzes the reaction of cyanate with bicarbonate to produce ammonia and carbon dioxide. This Coccidioides posadasii (strain C735) (Valley fever fungus) protein is Cyanate hydratase.